The chain runs to 1358 residues: Phosphoribosylformylglycinamidine synthase (1358 aa).

T2 is modified (N-acetylthreonine). The segment at A339–G363 is disordered. ATP contacts are provided by residues G345–D356, N424–Y426, and A719. The Mg(2+) site is built by D720, E762, N766, and D930. S932 is an ATP binding site. The region spanning V1093–G1358 is the Glutamine amidotransferase type-1 domain. The Nucleophile role is filled by C1187. Catalysis depends on residues H1319 and E1321.

In the N-terminal section; belongs to the FGAMS family.

It localises to the cytoplasm. It catalyses the reaction N(2)-formyl-N(1)-(5-phospho-beta-D-ribosyl)glycinamide + L-glutamine + ATP + H2O = 2-formamido-N(1)-(5-O-phospho-beta-D-ribosyl)acetamidine + L-glutamate + ADP + phosphate + H(+). Its pathway is purine metabolism; IMP biosynthesis via de novo pathway; 5-amino-1-(5-phospho-D-ribosyl)imidazole from N(2)-formyl-N(1)-(5-phospho-D-ribosyl)glycinamide: step 1/2. Functionally, phosphoribosylformylglycinamidine synthase involved in the purines biosynthetic pathway. Catalyzes the ATP-dependent conversion of formylglycinamide ribonucleotide (FGAR) and glutamine to yield formylglycinamidine ribonucleotide (FGAM) and glutamate. This Saccharomyces cerevisiae (strain ATCC 204508 / S288c) (Baker's yeast) protein is Phosphoribosylformylglycinamidine synthase (ADE6).